We begin with the raw amino-acid sequence, 159 residues long: Protein Smg homolog (159 aa).

Belongs to the Smg family.

The polypeptide is Protein Smg homolog (Shewanella amazonensis (strain ATCC BAA-1098 / SB2B)).